Here is a 72-residue protein sequence, read N- to C-terminus: MSQNNLKFTEFLSNVKSKANSKGFMKLFDMYHRQVVVKKPFSFLVHIMCGLTLTSYVIRHDKVEHHKTQPYH.

A helical transmembrane segment spans residues 41–58 (FSFLVHIMCGLTLTSYVI).

It localises to the membrane. This is an uncharacterized protein from Dictyostelium discoideum (Social amoeba).